We begin with the raw amino-acid sequence, 82 residues long: Small ribosomal subunit protein bS20 (82 aa).

This sequence belongs to the bacterial ribosomal protein bS20 family.

In terms of biological role, binds directly to 16S ribosomal RNA. This Streptococcus suis (strain 98HAH33) protein is Small ribosomal subunit protein bS20.